We begin with the raw amino-acid sequence, 484 residues long: Sorting assembly machinery 50 kDa subunit (484 aa).

Belongs to the SAM50/omp85 family. As to quaternary structure, component of the mitochondrial outer membrane sorting assembly machinery (SAM or TOB) complex, which at least consists of SAM35, SAM37 and SAM50. Associates with the mitochondrial contact site and cristae organizing system (MICOS) complex (also known as MINOS or MitOS complex).

The protein resides in the mitochondrion outer membrane. Component of the mitochondrial outer membrane sorting assembly machinery (SAM or TOB) complex, which is required for the sorting of proteins with complicated topology, such as beta-barrel proteins, to the mitochondrial outer membrane after import by the TOM complex. The chain is Sorting assembly machinery 50 kDa subunit (SAM50) from Saccharomyces cerevisiae (strain ATCC 204508 / S288c) (Baker's yeast).